The chain runs to 300 residues: MDYGDDDRSSSWNWQVDNYNHQPQSHFSDVPDCTMTEVTLNQEDHSYMFDDENTPVKACSELGYHVTTEDTNRKMEVHSETRSALKRRRMLQFEDQPETSLFSSESFSAILKSSARDDTFDELLPEGSQLIEGFSEDASASSFEGLDLYAEEWYADCLNDAETPMLPDDLNFGSPDVQVDISEYLNVPPETETREVQRPVTRSSPNVIFKGRKSFSRPVSKLPSSIIYPFAFIKPCGVHGGMTLKDINQKIRNPPAKPKAHIEEPAVIQTSAFSGKPVVGKTKIRTEGGKGSITIMRTRG.

In terms of assembly, interacts (via C-terminal domain) with MIP1.

It is found in the nucleus. Required for mitotic division of the generative cell nucleus and the development of mature tricellular pollen grains, and for male and female meiosis. This Arabidopsis thaliana (Mouse-ear cress) protein is Protein XRI1 (XRI1).